A 404-amino-acid chain; its full sequence is MLRWTTAGESHGRALVAVLEGMVAGVSLTTEDIGAQLRRRRLGYGRGARMKFEQDEITMLGGVRHGVTLGGPIAIQIGNTEWPKWETVMAADPVDPAELAEIARNAPLTRPRPGHADYAGMLKYGFDDARPVLERASARETAARVAAGTVARAFLRQALGVEVVSHVISIGASTPYDGPPPQPADLTAIDDSPVRAFDEAAEKSMIAEIEAAKRDGDTLGGVVEVVVSGLPVGLGSFTSGDNRLDSQLAAAVMGIQAIKGVEIGDGFETARRRGSVAHDEIYPGPDGVVRSTNRAGGLEGGMTNGQPLRVRAAMKPISTVPRALATVDMTTGDEAVAIHQRSDVCAVPAAGVVVETMVALVLARAALQKFGGDSLTETRTNVESYLRAVAAREPATAQRAQASG.

Residues Arg-40 and Arg-46 each coordinate NADP(+). Residues 135–137 (RAS), 256–257 (QA), Gly-300, 315–319 (KPIST), and Arg-341 each bind FMN.

It belongs to the chorismate synthase family. Homotetramer. The cofactor is FMNH2.

The enzyme catalyses 5-O-(1-carboxyvinyl)-3-phosphoshikimate = chorismate + phosphate. It functions in the pathway metabolic intermediate biosynthesis; chorismate biosynthesis; chorismate from D-erythrose 4-phosphate and phosphoenolpyruvate: step 7/7. Functionally, catalyzes the anti-1,4-elimination of the C-3 phosphate and the C-6 proR hydrogen from 5-enolpyruvylshikimate-3-phosphate (EPSP) to yield chorismate, which is the branch point compound that serves as the starting substrate for the three terminal pathways of aromatic amino acid biosynthesis. This reaction introduces a second double bond into the aromatic ring system. This is Chorismate synthase from Mycobacterium sp. (strain JLS).